Consider the following 255-residue polypeptide: Small ribosomal subunit protein uS2 (255 aa).

Residues 232-255 (ASGRDLGASEEVPVEPALEEASEA) form a disordered region.

It belongs to the universal ribosomal protein uS2 family.

This is Small ribosomal subunit protein uS2 from Rhizobium meliloti (strain 1021) (Ensifer meliloti).